The following is a 543-amino-acid chain: Organic anion transporter 3 (543 aa).

The Cytoplasmic portion of the chain corresponds to 1–21 (MTFAELVDRVGSKGPFQLLHT). Residues 22-42 (VLLGLPILGMANHNLLQIFTA) form a helical membrane-spanning segment. The Extracellular segment spans residues 43–124 (PTPAHHCRPP…LVCSSSKLKE (82 aa)). Asn-81 is a glycosylation site (N-linked (GlcNAc...) asparagine). Residues 125 to 145 (MAQSVFMAGILVGGLVLGALS) form a helical membrane-spanning segment. Topologically, residues 146–151 (DRFGRK) are cytoplasmic. Residues 152–172 (PILIFSYLLLGASGSGAAFSP) form a helical membrane-spanning segment. The Extracellular portion of the chain corresponds to 173–181 (TFSIYAVFR). Residues 182-202 (FLCGFSISGISLSTAILNVEW) traverse the membrane as a helical segment. Topologically, residues 203–212 (VSTRFRAIKS) are cytoplasmic. Residues 213–233 (IAVGFFYTFGQFILPGLAYAI) form a helical membrane-spanning segment. The Extracellular portion of the chain corresponds to 234–237 (PQWR). A helical transmembrane segment spans residues 238–258 (WLQLTVSVPFLTFFLLSWWLP). Residues 259–328 (ESIRWMVLSG…FRTPVLRRVT (70 aa)) lie on the Cytoplasmic side of the membrane. A helical transmembrane segment spans residues 329–349 (LCLSLAWFATGFAYYSLAMGV). Over 350–355 (EEFGVN) the chain is Extracellular. Residues 356-376 (LYVLQLIFGGVDVPAKFITML) traverse the membrane as a helical segment. Over 377–388 (SISYLGRHITEG) the chain is Cytoplasmic. The chain crosses the membrane as a helical span at residues 389–409 (IVLLLAGGCILALIFVPLDLM). The Extracellular segment spans residues 410 to 412 (TLR). A helical membrane pass occupies residues 413–433 (TVLAVFGKGCLSGSFSCLFLY). Residues 434 to 472 (TSELYPTVIRQTGMGASNLWARVGSMTAPLVKITGELQP) are Cytoplasmic-facing. Residues 473 to 493 (FIPNIIFGTIALLGGSAALFL) traverse the membrane as a helical segment. Residues 494–543 (PETLNRPLPETIEDIETWSLRAKEPKPEPEAEKSSQRIPLQPCEPGPGPS) are Extracellular-facing. A disordered region spans residues 513–543 (LRAKEPKPEPEAEKSSQRIPLQPCEPGPGPS). Over residues 514–528 (RAKEPKPEPEAEKSS) the composition is skewed to basic and acidic residues.

The protein belongs to the major facilitator (TC 2.A.1) superfamily. Organic cation transporter (TC 2.A.1.19) family. As to expression, expressed in kidney.

The protein localises to the basolateral cell membrane. It carries out the reaction estrone 3-sulfate(out) + glutarate(in) = estrone 3-sulfate(in) + glutarate(out). The enzyme catalyses estrone 3-sulfate(in) + 2-oxoglutarate(out) = estrone 3-sulfate(out) + 2-oxoglutarate(in). The catalysed reaction is glutarate(in) + 2-oxoglutarate(out) = glutarate(out) + 2-oxoglutarate(in). It catalyses the reaction urate(in) + 2-oxoglutarate(out) = urate(out) + 2-oxoglutarate(in). It carries out the reaction taurocholate(out) + glutarate(in) = taurocholate(in) + glutarate(out). The enzyme catalyses dehydroepiandrosterone 3-sulfate(out) + glutarate(in) = dehydroepiandrosterone 3-sulfate(in) + glutarate(out). The catalysed reaction is prostaglandin F2alpha(out) + glutarate(in) = prostaglandin F2alpha(in) + glutarate(out). It catalyses the reaction prostaglandin F2alpha(out) + 2-oxoglutarate(in) = prostaglandin F2alpha(in) + 2-oxoglutarate(out). It carries out the reaction (R)-carnitine(out) + 2-oxoglutarate(in) = (R)-carnitine(in) + 2-oxoglutarate(out). The enzyme catalyses glutarate(in) + (R)-carnitine(out) = glutarate(out) + (R)-carnitine(in). The catalysed reaction is prostaglandin E2(out) + 2-oxoglutarate(in) = prostaglandin E2(in) + 2-oxoglutarate(out). It catalyses the reaction prostaglandin E2(out) + glutarate(in) = prostaglandin E2(in) + glutarate(out). It carries out the reaction urate(in) + glutarate(out) = urate(out) + glutarate(in). The enzyme catalyses taurocholate(out) + 2-oxoglutarate(in) = taurocholate(in) + 2-oxoglutarate(out). The catalysed reaction is dehydroepiandrosterone 3-sulfate(out) + 2-oxoglutarate(in) = dehydroepiandrosterone 3-sulfate(in) + 2-oxoglutarate(out). It catalyses the reaction kynurenate(out) + a dicarboxylate(in) = kynurenate(in) + a dicarboxylate(out). It carries out the reaction (indol-3-yl)acetate(out) + a dicarboxylate(in) = (indol-3-yl)acetate(in) + a dicarboxylate(out). The enzyme catalyses indoxyl sulfate(out) + a dicarboxylate(in) = indoxyl sulfate(in) + a dicarboxylate(out). The catalysed reaction is N-benzoylglycine(out) + a dicarboxylate(in) = N-benzoylglycine(in) + a dicarboxylate(out). It catalyses the reaction 3-carboxy-4-methyl-5-propyl-2-furanpropanoate(out) + a dicarboxylate(in) = 3-carboxy-4-methyl-5-propyl-2-furanpropanoate(in) + a dicarboxylate(out). It carries out the reaction (6R)-L-erythro-5,6,7,8-tetrahydrobiopterin(out) + a dicarboxylate(in) = (6R)-L-erythro-5,6,7,8-tetrahydrobiopterin(in) + a dicarboxylate(out). The enzyme catalyses L-erythro-7,8-dihydrobiopterin(out) + a dicarboxylate(in) = L-erythro-7,8-dihydrobiopterin(in) + a dicarboxylate(out). The catalysed reaction is L-sepiapterin(out) + a dicarboxylate(in) = L-sepiapterin(in) + a dicarboxylate(out). In terms of biological role, functions as an organic anion/dicarboxylate exchanger that couples organic anion uptake indirectly to the sodium gradient. Transports organic anions such as estrone 3-sulfate (E1S) and urate in exchange for dicarboxylates such as glutarate or ketoglutarate (2-oxoglutarate). Plays an important role in the excretion of endogenous and exogenous organic anions, especially from the kidney and the brain. E1S transport is pH- and chloride-dependent and may also involve E1S/cGMP exchange. Responsible for the transport of prostaglandin E2 (PGE2) and prostaglandin F2(alpha) (PGF2(alpha)) in the basolateral side of the renal tubule. Involved in the transport of neuroactive tryptophan metabolites kynurenate and xanthurenate. Functions as a biopterin transporters involved in the uptake and the secretion of coenzymes tetrahydrobiopterin (BH4), dihydrobiopterin (BH2) and sepiapterin to urine, thereby determining baseline levels of blood biopterins. May be involved in the basolateral transport of steviol, a metabolite of the popular sugar substitute stevioside. May participate in the detoxification/ renal excretion of drugs and xenobiotics, such as the histamine H(2)-receptor antagonists fexofenadine and cimetidine, the antibiotic benzylpenicillin (PCG), the anionic herbicide 2,4-dichloro-phenoxyacetate (2,4-D), the diagnostic agent p-aminohippurate (PAH), the antiviral acyclovir (ACV), and the mycotoxin ochratoxin (OTA), by transporting these exogenous organic anions across the cell membrane in exchange for dicarboxylates such as 2-oxoglutarate. Contributes to the renal uptake of potent uremic toxins (indoxyl sulfate (IS), indole acetate (IA), hippurate/N-benzoylglycine (HA) and 3-carboxy-4-methyl-5-propyl-2-furanpropionate (CMPF)), pravastatin, PCG, E1S and dehydroepiandrosterone sulfate (DHEAS), and is partly involved in the renal uptake of temocaprilat (an angiotensin-converting enzyme (ACE) inhibitor). May contribute to the release of cortisol in the adrenals. Involved in one of the detoxification systems on the choroid plexus (CP), removes substrates such as E1S or taurocholate (TC), PCG, 2,4-D and PAH, from the cerebrospinal fluid (CSF) to the blood for eventual excretion in urine and bile. Also contributes to the uptake of several other organic compounds such as the prostanoids prostaglandin E(2) and prostaglandin F(2-alpha), L-carnitine, and the therapeutic drugs allopurinol, 6-mercaptopurine (6-MP) and 5-fluorouracil (5-FU). Mediates the transport of PAH, PCG, and the statins pravastatin and pitavastatin, from the cerebrum into the blood circulation across the blood-brain barrier (BBB). In summary, plays a role in the efflux of drugs and xenobiotics, helping reduce their undesired toxicological effects on the body. The protein is Organic anion transporter 3 (SLC22A8) of Sus scrofa (Pig).